Here is a 187-residue protein sequence, read N- to C-terminus: Elongation factor P (187 aa).

The protein belongs to the elongation factor P family.

It localises to the cytoplasm. The protein operates within protein biosynthesis; polypeptide chain elongation. Its function is as follows. Involved in peptide bond synthesis. Stimulates efficient translation and peptide-bond synthesis on native or reconstituted 70S ribosomes in vitro. Probably functions indirectly by altering the affinity of the ribosome for aminoacyl-tRNA, thus increasing their reactivity as acceptors for peptidyl transferase. This Wolinella succinogenes (strain ATCC 29543 / DSM 1740 / CCUG 13145 / JCM 31913 / LMG 7466 / NCTC 11488 / FDC 602W) (Vibrio succinogenes) protein is Elongation factor P.